A 436-amino-acid polypeptide reads, in one-letter code: MAVTVETLEKLERKITLSLPLTAIQSEVDSRLKRLARTVKMDGFRPGKVPMNVVAQRYGYSVQYEVLNDKVGEAFAQAANEANLRVAGQPRITEKEGAPEGQVTFDAVFEVFPEVKIGDLSTADVEKISADVTDAAIDKTIDILRKQRRTFAQRAQGTPAEDGDRVTVDFEGKIDGETFSGGKAEDFQFLVGEGQMLKEFEDAVRGMKAGESKTFPLAFPEDYHGKDVAGKTADFLVTVKKIEAAHLPEVNEQLAKSLGIADGTVEGLRADIKKNLEREVKFRLLARNKQAVMEALVSKAELDLPNASVQAEIARLLEGARADLKQRGIKDADKAEIPEDVFRPQAERRVRLGLVVAELVRANNLHATPEQLKAHVDELAASYEKPEDVVRWYFGDRQRLAEVEAVVIENNVTAFVLDKAKVTEKAISFDELMGQG.

Residues 163 to 248 (GDRVTVDFEG…VKKIEAAHLP (86 aa)) form the PPIase FKBP-type domain.

It belongs to the FKBP-type PPIase family. Tig subfamily.

It is found in the cytoplasm. It catalyses the reaction [protein]-peptidylproline (omega=180) = [protein]-peptidylproline (omega=0). In terms of biological role, involved in protein export. Acts as a chaperone by maintaining the newly synthesized protein in an open conformation. Functions as a peptidyl-prolyl cis-trans isomerase. In Paracidovorax citrulli (strain AAC00-1) (Acidovorax citrulli), this protein is Trigger factor.